The primary structure comprises 648 residues: Macrolide export ATP-binding/permease protein MacB (648 aa).

Residues 5 to 243 (LELCNVSRSY…QGVDAAVVNT (239 aa)) enclose the ABC transporter domain. Position 41–48 (41–48 (GVSGSGKS)) interacts with ATP. 5 consecutive transmembrane segments (helical) span residues 273–293 (LLTM…VVVG), 417–437 (ANVV…IGVA), 523–543 (LFLT…VMNI), 577–597 (VLVC…IAFM), and 611–631 (LTAL…FGWL).

It belongs to the ABC transporter superfamily. Macrolide exporter (TC 3.A.1.122) family. As to quaternary structure, homodimer. Part of the tripartite efflux system MacAB-TolC, which is composed of an inner membrane transporter, MacB, a periplasmic membrane fusion protein, MacA, and an outer membrane component, TolC. The complex forms a large protein conduit and can translocate molecules across both the inner and outer membranes. Interacts with MacA.

The protein resides in the cell inner membrane. In terms of biological role, part of the tripartite efflux system MacAB-TolC. MacB is a non-canonical ABC transporter that contains transmembrane domains (TMD), which form a pore in the inner membrane, and an ATP-binding domain (NBD), which is responsible for energy generation. Confers resistance against macrolides. In Salmonella typhimurium (strain LT2 / SGSC1412 / ATCC 700720), this protein is Macrolide export ATP-binding/permease protein MacB.